A 378-amino-acid polypeptide reads, in one-letter code: Gibberellin 20 oxidase 2 (378 aa).

Residues 1 to 10 (MAILCTTTSP) are compositionally biased toward polar residues. Residues 1 to 26 (MAILCTTTSPAEKEHEPKQDLEKDQT) are disordered. Residues 11-25 (AEKEHEPKQDLEKDQ) show a composition bias toward basic and acidic residues. The region spanning 220–320 (ENDSIMRLNH…RKSMAFFLCP (101 aa)) is the Fe2OG dioxygenase domain. The Fe cation site is built by His-245, Asp-247, and His-301. Arg-311 is a catalytic residue.

Belongs to the iron/ascorbate-dependent oxidoreductase family. GA20OX subfamily. The cofactor is Fe(2+). L-ascorbate serves as cofactor. In terms of tissue distribution, expressed in inflorescence and developing siliques. Detected in seeds, roots, cotyledons and leaves. In seeds, specifically detected at the rim of the embryo and the outer integument.

The enzyme catalyses gibberellin A12 + 2 2-oxoglutarate + 3 O2 + H(+) = gibberellin A9 + 2 succinate + 3 CO2 + 2 H2O. The catalysed reaction is gibberellin A12 + 2-oxoglutarate + O2 = gibberellin A15 + succinate + CO2. It carries out the reaction gibberellin A15 + 2-oxoglutarate + O2 = gibberellin A24 + succinate + CO2 + H2O. It catalyses the reaction gibberellin A53 + 2-oxoglutarate + O2 = gibberellin A44 + succinate + CO2. The enzyme catalyses gibberellin A12 + 3 2-oxoglutarate + 3 O2 = gibberellin A25 + 3 succinate + 3 CO2 + H2O + H(+). The protein operates within plant hormone biosynthesis; gibberellin biosynthesis. Key oxidase enzyme in the biosynthesis of gibberellin that catalyzes the conversion of GA12 to GA9, via a three-step oxidation at C-20 of the GA skeleton, and GA25 is also formed as a minor product. GA53 is less effectively oxidized than GA12 and is only oxidized one step to GA44. Involved in the promotion of the floral transition, fertility and silique elongation, but plays only a minor role in elongation of seedling organs. Acts redundantly with GA20OX1. This Arabidopsis thaliana (Mouse-ear cress) protein is Gibberellin 20 oxidase 2 (GA20OX2).